Reading from the N-terminus, the 214-residue chain is Endothelin-3 (214 aa).

The first 16 residues, 1–16 (MEPGLWLLLGLTVTSA), serve as a signal peptide directing secretion. A propeptide spanning residues 17-94 (AGLVPCPQSG…DKGLPAHHRP (78 aa)) is cleaved from the precursor. The disordered stretch occupies residues 24-91 (QSGDSGRASV…KQEDKGLPAH (68 aa)). The span at 25–35 (SGDSGRASVSQ) shows a compositional bias: polar residues. 2 disulfides stabilise this stretch: C97–C111 and C99–C107. A propeptide spanning residues 118–214 (INTPEQTVPY…MSRTDKAHRP (97 aa)) is cleaved from the precursor. The segment at 159–173 (CTCMGADDKACAHFC) is endothelin-like. The interval 183–214 (SGRAERPAAEEMRETGGPRQRLMSRTDKAHRP) is disordered. Over residues 185-198 (RAERPAAEEMRETG) the composition is skewed to basic and acidic residues.

This sequence belongs to the endothelin/sarafotoxin family.

It is found in the secreted. Functionally, endothelins are endothelium-derived vasoconstrictor peptides. This Mus musculus (Mouse) protein is Endothelin-3 (Edn3).